The following is a 555-amino-acid chain: CTP synthase (555 aa).

The segment at 1-271 (MVKRGKKTKY…DDKLAELFNI (271 aa)) is amidoligase domain. CTP is bound at residue Ser-19. Ser-19 is a binding site for UTP. Residues 20-25 (SLGKGL) and Asp-77 each bind ATP. Mg(2+) is bound by residues Asp-77 and Glu-145. Residues 152–154 (DIE), 192–197 (KTKPTQ), and Lys-228 each bind CTP. UTP-binding positions include 192–197 (KTKPTQ) and Lys-228. The Glutamine amidotransferase type-1 domain maps to 297-537 (RIGIVGKYVE…VKAALEHRDA (241 aa)). Residue Gly-358 participates in L-glutamine binding. Cys-385 functions as the Nucleophile; for glutamine hydrolysis in the catalytic mechanism. Residues 386–389 (LGLQ), Glu-409, and Arg-466 contribute to the L-glutamine site. Residues His-510 and Glu-512 contribute to the active site. The segment at 535–555 (RDAQQRQPPAEVKKLAVGKNG) is disordered.

It belongs to the CTP synthase family. Homotetramer.

It carries out the reaction UTP + L-glutamine + ATP + H2O = CTP + L-glutamate + ADP + phosphate + 2 H(+). The catalysed reaction is L-glutamine + H2O = L-glutamate + NH4(+). The enzyme catalyses UTP + NH4(+) + ATP = CTP + ADP + phosphate + 2 H(+). The protein operates within pyrimidine metabolism; CTP biosynthesis via de novo pathway; CTP from UDP: step 2/2. With respect to regulation, allosterically activated by GTP, when glutamine is the substrate; GTP has no effect on the reaction when ammonia is the substrate. The allosteric effector GTP functions by stabilizing the protein conformation that binds the tetrahedral intermediate(s) formed during glutamine hydrolysis. Inhibited by the product CTP, via allosteric rather than competitive inhibition. Its function is as follows. Catalyzes the ATP-dependent amination of UTP to CTP with either L-glutamine or ammonia as the source of nitrogen. Regulates intracellular CTP levels through interactions with the four ribonucleotide triphosphates. This chain is CTP synthase, found in Anaeromyxobacter sp. (strain K).